The following is a 317-amino-acid chain: uncharacterized protein (317 aa).

The segment covering 1 to 11 (MASAGAERRPG) has biased composition (basic and acidic residues). A disordered region spans residues 1 to 164 (MASAGAERRP…KAKKRKSLGA (164 aa)). Positions 19–34 (GQGQLTEEPGSAQTSE) are enriched in polar residues. 2 stretches are compositionally biased toward basic and acidic residues: residues 47–58 (HEARGTQSEDQR) and 71–92 (EGPK…ERGP). Basic residues-rich tracts occupy residues 100–110 (RPRHGPKRKPV) and 151–161 (KQHKKAKKRKS).

This is an uncharacterized protein from Homo sapiens (Human).